The sequence spans 367 residues: tRNA-specific 2-thiouridylase MnmA (367 aa).

ATP-binding positions include 12-19 and methionine 38; that span reads GMSGGVDS. The tract at residues 98–100 is interaction with target base in tRNA; that stretch reads NPD. The Nucleophile role is filled by cysteine 103. Cysteines 103 and 200 form a disulfide. Glycine 128 lines the ATP pocket. Residues 150–152 form an interaction with tRNA region; the sequence is KDQ. Cysteine 200 (cysteine persulfide intermediate) is an active-site residue. Residues 312–313 are interaction with tRNA; the sequence is RY.

It belongs to the MnmA/TRMU family. Interacts with TusE.

It localises to the cytoplasm. It carries out the reaction S-sulfanyl-L-cysteinyl-[protein] + uridine(34) in tRNA + AH2 + ATP = 2-thiouridine(34) in tRNA + L-cysteinyl-[protein] + A + AMP + diphosphate + H(+). Catalyzes the 2-thiolation of uridine at the wobble position (U34) of tRNA(Lys), tRNA(Glu) and tRNA(Gln), leading to the formation of s(2)U34, the first step of tRNA-mnm(5)s(2)U34 synthesis. Sulfur is provided by IscS, via a sulfur-relay system. Binds ATP and its substrate tRNAs. The polypeptide is tRNA-specific 2-thiouridylase MnmA (Photorhabdus laumondii subsp. laumondii (strain DSM 15139 / CIP 105565 / TT01) (Photorhabdus luminescens subsp. laumondii)).